Consider the following 627-residue polypeptide: Plasmepsin IX (627 aa).

Residues 1–13 (MFFINFKKIKKKQ) are Cytoplasmic-facing. Residues 14-34 (FPIYLTQHRIITVFLIFIYFI) traverse the membrane as a helical; Signal-anchor for type II membrane protein segment. Over 35-627 (NLKDCFHINN…SSLHNKINNL (593 aa)) the chain is Lumenal. The Peptidase A1 domain occupies 228 to 605 (YVGYIQIGTP…NNNSSYVGIA (378 aa)). Residues Asp246 and Asp495 contribute to the active site.

Belongs to the peptidase A1 family. Autocleaved into a p55 mature form.

The protein resides in the membrane. It localises to the cytoplasmic vesicle. The protein localises to the secretory vesicle. Its subcellular location is the rhoptry. With respect to regulation, inhibited by small molecule 49c. Inhibited by small molecule WM382. Its function is as follows. During the asexual blood stage, initiates the proteolytic maturation of several rhoptry proteins and thus, is required for merozoite invasion of host erythrocytes and probably the subsequent development of the ring-stage. Cleaves rhoptry associated protein 1 RAP1 and apical sushi protein ASP during schizont maturation. Also cleaves rhoptry protein RON3. This chain is Plasmepsin IX, found in Plasmodium falciparum (isolate 3D7).